Consider the following 111-residue polypeptide: Glutaredoxin-C2 (111 aa).

One can recognise a Glutaredoxin domain in the interval 3–103 (MQKAKEIVNS…PLLTEAGAIA (101 aa)). Cys23 and Cys26 are disulfide-bonded.

Belongs to the glutaredoxin family. CPYC subfamily.

It is found in the cytoplasm. Has a glutathione-disulfide oxidoreductase activity in the presence of NADPH and glutathione reductase. Reduces low molecular weight disulfides and proteins. The polypeptide is Glutaredoxin-C2 (GRXC2) (Arabidopsis thaliana (Mouse-ear cress)).